A 957-amino-acid polypeptide reads, in one-letter code: ERC protein 2 (957 aa).

The span at 1 to 13 shows a compositional bias: polar residues; it reads MYGSARTITNLEG. Residues 1-44 are disordered; the sequence is MYGSARTITNLEGSPSRSPRLPRSPRLGHRRTSSGGGGGTGKTL. A compositionally biased stretch (low complexity) spans 14-25; that stretch reads SPSRSPRLPRSP. Phosphoserine is present on residues Ser-65 and Ser-666. Residues 140–917 are a coiled coil; it reads RQVRDSTMLD…RMKLMADNYD (778 aa). Positions 918 to 957 are disordered; sequence DDHHHYHHHHHHHHHRSPGRSQHSNHRPSPDQDDEEGIWA. Basic residues predominate over residues 922–943; sequence HYHHHHHHHHHRSPGRSQHSNH. The span at 948–957 shows a compositional bias: acidic residues; that stretch reads DQDDEEGIWA.

Interacts with BSN, ERC1, PPFIA1, PPFIA2, PPFIA3 and PPFIA4. Interacts through its C-terminus with the PDZ domain of RIMS1. Part of a complex consisting of ERC2, RIMS1 and UNC13A.

It is found in the cytoplasm. Its subcellular location is the synapse. It localises to the presynaptic active zone. The protein localises to the cytoskeleton. Thought to be involved in the organization of the cytomatrix at the nerve terminals active zone (CAZ) which regulates neurotransmitter release. Seems to act together with BSN. May recruit liprin-alpha proteins to the CAZ. This Homo sapiens (Human) protein is ERC protein 2 (ERC2).